A 282-amino-acid polypeptide reads, in one-letter code: MRITQILLCLVIVALSSSSHVWSDQIFPAHLVGTFSRNNREPKYKIEFLPEDSPFHPGDNLESMVMLDKHGNRFLCYLPKEEKATSGWTSSQQNISTVMMETQQLVKLKTPDELLQPLSEKCLFRQEGWWSYEFCHQKYVRQLHVEDENKIVQEFFLGTFDPEATAAFNQTVSDASTDASQRYHSHVYTNGTTCDLTGSPREVEVRFVCAETRAMVTSITELSTCKYALTVQCPTLCKHPLFQLEKPVSHTIHCNAIPVEEDATRNKEEQAVDESPKMIADS.

A signal peptide spans 1–23 (MRITQILLCLVIVALSSSSHVWS). N94 carries N-linked (GlcNAc...) asparagine glycosylation. The region spanning 120–239 (EKCLFRQEGW…TVQCPTLCKH (120 aa)) is the MRH domain. C122 and C135 are oxidised to a cystine. Residues W129, W130, and Q142 each coordinate a mannooligosaccharide derivative. N-linked (GlcNAc...) asparagine glycosylation is found at N169 and N190. 2 disulfide bridges follow: C194-C225 and C209-C237. D195, R201, E221, and Y227 together coordinate a mannooligosaccharide derivative. Basic and acidic residues predominate over residues 262–276 (DATRNKEEQAVDESP). Residues 262–282 (DATRNKEEQAVDESPKMIADS) are disordered.

Belongs to the OS-9 family. As to quaternary structure, interacts with HRD3A.

Its subcellular location is the endoplasmic reticulum. Its function is as follows. Lectin which functions in endoplasmic reticulum (ER) quality control and ER-associated degradation (ERAD). May bind terminally misfolded non-glycosylated proteins as well as improperly folded glycoproteins, retain them in the ER, and possibly transfer them to the ubiquitination machinery and promote their degradation. Targets the misfolded LRR receptor kinase BRI1 and the misfolded receptor-like kinase EFR. The chain is Protein OS-9 homolog from Arabidopsis thaliana (Mouse-ear cress).